The chain runs to 69 residues: MKTHYFLLVMLFFLFSQMELGAGILTSLGRRTDQYRCLQNGGFCLRSSCPSHTKLQGTCKPDKPNCCRS.

The first 21 residues, 1–21 (MKTHYFLLVMLFFLFSQMELG), serve as a signal peptide directing secretion. The propeptide occupies 22–32 (AGILTSLGRRT). 3 disulfide bridges follow: cysteine 37–cysteine 66, cysteine 44–cysteine 59, and cysteine 49–cysteine 67.

Belongs to the beta-defensin family. As to quaternary structure, monomer. Homodimer. As to expression, highly expressed in kidney.

It is found in the secreted. The protein localises to the membrane. In terms of biological role, has bactericidal activity. May act as a ligand for C-C chemokine receptor CCR6. Positively regulates the sperm motility and bactericidal activity in a CCR6-dependent manner. Binds to CCR6 and triggers Ca2+ mobilization in the sperm which is important for its motility. This chain is Beta-defensin 1 (Defb1), found in Rattus norvegicus (Rat).